The following is a 197-amino-acid chain: dTTP/UTP pyrophosphatase (197 aa).

Asp-70 serves as the catalytic Proton acceptor.

The protein belongs to the Maf family. YhdE subfamily. A divalent metal cation serves as cofactor.

It is found in the cytoplasm. The enzyme catalyses dTTP + H2O = dTMP + diphosphate + H(+). The catalysed reaction is UTP + H2O = UMP + diphosphate + H(+). Nucleoside triphosphate pyrophosphatase that hydrolyzes dTTP and UTP. May have a dual role in cell division arrest and in preventing the incorporation of modified nucleotides into cellular nucleic acids. This Shigella dysenteriae serotype 1 (strain Sd197) protein is dTTP/UTP pyrophosphatase (yceF).